Here is a 616-residue protein sequence, read N- to C-terminus: UDP-sugar pyrophosphorylase (616 aa).

It belongs to the USP family. Mg(2+) is required as a cofactor. Requires Mn(2+) as cofactor.

It catalyses the reaction a monosaccharide 1-phosphate + UTP + H(+) = a UDP-monosaccharide + diphosphate. In terms of biological role, may function as the terminal enzyme of the myo-inositol oxidation (MIO) pathway. May also play a role in the salvage pathway for synthesis of nucleotide sugars. This Oryza sativa subsp. japonica (Rice) protein is UDP-sugar pyrophosphorylase (USP).